The chain runs to 504 residues: Glucose-6-phosphate isomerase (504 aa).

E333 (proton donor) is an active-site residue. Catalysis depends on residues H364 and K473.

This sequence belongs to the GPI family.

The protein localises to the cytoplasm. It catalyses the reaction alpha-D-glucose 6-phosphate = beta-D-fructose 6-phosphate. The protein operates within carbohydrate biosynthesis; gluconeogenesis. It functions in the pathway carbohydrate degradation; glycolysis; D-glyceraldehyde 3-phosphate and glycerone phosphate from D-glucose: step 2/4. Catalyzes the reversible isomerization of glucose-6-phosphate to fructose-6-phosphate. The sequence is that of Glucose-6-phosphate isomerase from Xanthomonas axonopodis pv. citri (strain 306).